A 558-amino-acid chain; its full sequence is Poly(A) polymerase PAPalpha (558 aa).

Over residues 1-17 (MNTKTYGVTEPISTNGP) the composition is skewed to polar residues. The disordered stretch occupies residues 1-20 (MNTKTYGVTEPISTNGPTPK). ATP-binding positions include 86-88 (FGS), 99-101 (DID), Asp153, Lys214, Tyr223, and 232-233 (GV). 3 residues coordinate Mg(2+): Asp99, Asp101, and Asp153. The interval 516–558 (VYEDGEERPKKSGKKRKKVIKEDGQKRVRNESPASSASVNGSS) is disordered. A compositionally biased stretch (basic and acidic residues) spans 535–545 (IKEDGQKRVRN). Low complexity predominate over residues 547 to 558 (SPASSASVNGSS).

The protein belongs to the poly(A) polymerase family. Requires Mg(2+) as cofactor. Mn(2+) serves as cofactor.

It is found in the nucleus. It catalyses the reaction RNA(n) + ATP = RNA(n)-3'-adenine ribonucleotide + diphosphate. In terms of biological role, polymerase that creates the 3'-poly(A) tail of mRNA's. May acquire specificity through interaction with a cleavage and polyadenylation factor. In Candida albicans (strain SC5314 / ATCC MYA-2876) (Yeast), this protein is Poly(A) polymerase PAPalpha (PAPALPHA).